A 368-amino-acid chain; its full sequence is MDRIDVHHHFIPPAYVEAFKTTGGDPSGWHLPQWTPESSLSLMDSHNTRTAILSLTAPGTSILAHSPGASATLAREINLYAAKLHNENPTRFGFFASLPHLTPDTIPAAIEEAIYALETLHADGITLYTRYTGTGYLGHDAFAPLWEELNRRKAVVFIHPTNTAADARNRSILVNPALPQPIIDYPHETCRTAVDLITSGTISRNPDVKIILSHGGGTLPILATRAAHLLYDAKLTSISPEDFLEQARSFYFDLALSGNDENMQLLVGRNGFAKGGHVFYGSDFPYAPVSTINKYVRMMEGFSVQGEEVEKAIARDSAVKLFPRFQMPADLRVGKTNNWGAFSACLLLPVGLSALYSVLQSRVHTYST.

Residues His-7, His-9, and His-159 each coordinate Zn(2+). N-linked (GlcNAc...) asparagine glycosylation occurs at Asn-169. Asp-283 provides a ligand contact to Zn(2+). The helical transmembrane segment at 339-359 threads the bilayer; sequence WGAFSACLLLPVGLSALYSVL.

The protein belongs to the metallo-dependent hydrolases superfamily. ACMSD family.

The protein resides in the membrane. It carries out the reaction 6-methylsalicylate + H(+) = 3-methylphenol + CO2. Its pathway is secondary metabolite biosynthesis; terpenoid biosynthesis. Functionally, decarboxylase; part of the gene cluster that mediates the biosynthesis of yanuthone D, a fungal isoprenoid epoxycyclohexenone that acts as an antibiotic against fungi and bacteria. The first step of the pathway is the synthesis of 6-methylsalicylic acid (6-MSA) by the polyketide synthase yanA. 6-MSA is then converted to m-cresol by the decarboxylase yanB. The cytochrome P450 monooxygenase yanC then catalyzes the oxidation of m-cresol to toluquinol. Epoxidation of toluquinol is then performed by the short chain dehydrogenase yanD, with the help of yanE, and a further prenylation by yanG leads to 7-deacetoxyyanuthone A. The next step is the hydroxylation of C-22 of 7-deacetoxyyanuthone A by the cytochrome P450 monooxygenase yanH to yield 22-deacetylyanuthone A. O-Mevalon transferase yanI then attaches mevalon to the hydroxyl group of 22-deacetylyanuthone A to produce yanuthone E. Finally, the FAD-dependent monooxygenase yanF oxidizes the hydroxyl group at C15 of yanuthone E to form yanuthone D. Furthermore, several branching points in the pathway lead to the production of yanuthones F and G from 7-deacetoxyyanuthone A; yanuthones H and I from 22-deacetylyanuthone A; and yanuthone J from yanuthone E. This is Decarboxylase yanB from Aspergillus niger (strain ATCC 1015 / CBS 113.46 / FGSC A1144 / LSHB Ac4 / NCTC 3858a / NRRL 328 / USDA 3528.7).